A 371-amino-acid polypeptide reads, in one-letter code: MRALSVFVALFSFLALSSASPGQDVAKRVTSGSLQQVTNFGSNPSGTLMYIYVPNNLATKPGIVVAIHYCTGTAQAYYTGSPYAQLAEKYGFIVIYPQSPYSGTCWDVSSQSALTHNGGGDSNSIANMVTWTISQYNADTSKVFVTGSSSGAMMTNVMAATYPELFAAATVYSGVPAGCFYSSSNQVNGWNSSCAQGNVISTPEVWGGIAKAMYPGYTGPRPRMQIYHGSVDTTLYPQNYYETCKQWAGVFGYNYNSPQSTQSNTPQANYQTTIWGPNLQGIFATGVGHTVPIHGEQDMEWFGFTGGSSSTTTTATTPPTTSTTTSSGGSSTSTGVAEHWGQCGGNGWTGPTACASGYTCTVINEWYSQCL.

Residues 1–19 form the signal peptide; it reads MRALSVFVALFSFLALSSA. The segment at 32-304 is catalytic; the sequence is GSLQQVTNFG…GEQDMEWFGF (273 aa). Catalysis depends on serine 149, which acts as the Charge relay system. Asparagine 191 is a glycosylation site (N-linked (GlcNAc...) asparagine). A disordered region spans residues 305–335; the sequence is TGGSSSTTTTATTPPTTSTTTSSGGSSTSTG. Positions 305–336 are ser/Thr-rich linker; that stretch reads TGGSSSTTTTATTPPTTSTTTSSGGSSTSTGV. Low complexity predominate over residues 307-335; the sequence is GSSSTTTTATTPPTTSTTTSSGGSSTSTG. The CBM1 domain maps to 335 to 371; the sequence is GVAEHWGQCGGNGWTGPTACASGYTCTVINEWYSQCL.

This sequence belongs to the carbohydrate esterase 1 (CE1) family. AxeA subfamily. As to quaternary structure, monomer.

It localises to the secreted. It carries out the reaction Deacetylation of xylans and xylo-oligosaccharides.. It participates in glycan degradation; xylan degradation. In terms of biological role, acetylxylan esterase involved in the hydrolysis of xylan, a major structural heterogeneous polysaccharide found in plant biomass representing the second most abundant polysaccharide in the biosphere, after cellulose. Degrades acetylated xylans by cleaving acetyl side groups from the hetero-xylan backbone. This Aspergillus fumigatus (strain ATCC MYA-4609 / CBS 101355 / FGSC A1100 / Af293) (Neosartorya fumigata) protein is Probable acetylxylan esterase A (axeA).